The sequence spans 375 residues: DNA replication and repair protein RecF (375 aa).

Position 30-37 (30-37) interacts with ATP; that stretch reads GENAQGKT.

It belongs to the RecF family.

The protein resides in the cytoplasm. Its function is as follows. The RecF protein is involved in DNA metabolism; it is required for DNA replication and normal SOS inducibility. RecF binds preferentially to single-stranded, linear DNA. It also seems to bind ATP. The protein is DNA replication and repair protein RecF of Bacillus thuringiensis (strain Al Hakam).